The chain runs to 291 residues: MQRARPTLWAAALTLLVLLRGPPVARAGASSAGLGPVVRCEPCDARALAQCAPPPAVCAELVREPGCGCCLTCALSEGQPCGIYTERCGSGLRCQPSPDEARPLQALLDGRGLCVNASAVSRLRAYLLPAPPAPGNASESEEDRSAGSVESPSVSSTHRVSDPKFHPLHSKIIIIKKGHAKDSQRYKVDYESQSTDTQNFSSESKRETEYGPCRREMEDTLNHLKFLNVLSPRGVHIPNCDKKGFYKKKQCRPSKGRKRGFCWCVDKYGQPLPGYTTKGKEDVHCYSMQSK.

The first 27 residues, M1 to A27, serve as a signal peptide directing secretion. The segment at G28–P134 is IGF-binding. The IGFBP N-terminal domain occupies P36–A117. Disulfide bonds link C40–C67, C43–C69, C51–C70, C58–C73, C81–C94, and C88–C114. N116 and N136 each carry an N-linked (GlcNAc...) (complex) asparagine glycan. Disordered stretches follow at residues A130–D162 and D189–G211. Residues A146–S156 show a composition bias toward low complexity. Position 148 is a phosphoserine; by FAM20C (S148). Residues E191–S202 show a composition bias toward polar residues. At S194 the chain carries Phosphoserine; by CK2. N199 is a glycosylation site (N-linked (GlcNAc...) (complex) asparagine). S201 bears the Phosphoserine; by FAM20C mark. S202 carries the phosphoserine; by CK2 modification. The 76-residue stretch at Y210 to C285 folds into the Thyroglobulin type-1 domain. Intrachain disulfides connect C213–C240, C251–C262, and C264–C285.

Interacts with XLKD1. Binds IGF2 more than IGF1. Forms a ternary complex of about 140 to 150 kDa with IGF1 or IGF2 and a 85 kDa glycoprotein (ALS). Interacts with humanin; humanin competes with importin KPNB1 for binding to IGFBP3, blocking IGFBP3 nuclear import and IGFBP3-mediated apoptosis. Interacts with TMEM219. Interacts with RXRA; this interaction modulates the transcriptional activity of RXRA. Interacts with LRP1; this interaction mediates cell growth inhibition independent of IGF1. Phosphorylated by FAM20C in the extracellular medium. Phosphorylated by CK2; resulting in decreased nuclear localization. Expressed by most tissues. Present in plasma.

The protein resides in the secreted. Its subcellular location is the nucleus. In terms of biological role, multifunctional protein that plays a critical role in regulating the availability of IGFs such as IGF1 and IGF2 to their receptors and thereby regulates IGF-mediated cellular processes including proliferation, differentiation, and apoptosis in a cell-type specific manner. Also exhibits IGF-independent antiproliferative and apoptotic effects mediated by its receptor TMEM219/IGFBP-3R. Inhibits the positive effect of humanin on insulin sensitivity. Promotes testicular germ cell apoptosis. Acts via LRP-1/alpha2M receptor, also known as TGF-beta type V receptor, to mediate cell growth inhibition independent of IGF1. Mechanistically, induces serine-specific dephosphorylation of IRS1 or IRS2 upon ligation to its receptor, leading to the inhibitory cascade. In the nucleus, interacts with transcription factors such as retinoid X receptor-alpha/RXRA to regulate transcriptional signaling and apoptosis. The protein is Insulin-like growth factor-binding protein 3 (IGFBP3) of Homo sapiens (Human).